A 100-amino-acid polypeptide reads, in one-letter code: Small ribosomal subunit protein uS14c (100 aa).

Belongs to the universal ribosomal protein uS14 family. As to quaternary structure, part of the 30S ribosomal subunit.

It localises to the plastid. Its subcellular location is the chloroplast. Functionally, binds 16S rRNA, required for the assembly of 30S particles. The chain is Small ribosomal subunit protein uS14c from Pleurastrum terricola (Filamentous green alga).